The chain runs to 95 residues: Neutrophil antibiotic peptide NP-4 (95 aa).

A signal peptide spans 1–19; the sequence is MRTLALLAAILLVTLQAQA. Positions 20 to 62 are excised as a propeptide; that stretch reads ELHSGMADDGVDQQQPRAQDLDVAVYIKQDETSPLEVLGAKAG. 3 disulfide bridges follow: Cys65–Cys93, Cys67–Cys82, and Cys72–Cys92.

The protein belongs to the alpha-defensin family.

The protein localises to the secreted. Functionally, microbicidal activity. The protein is Neutrophil antibiotic peptide NP-4 of Oryctolagus cuniculus (Rabbit).